A 309-amino-acid polypeptide reads, in one-letter code: Pyrroline-5-carboxylate reductase 1, mitochondrial (309 aa).

Residue Ser-2 is modified to N-acetylserine. NADP(+) is bound by residues 6 to 11 (IGAGQL) and Ser-34. 9 residues coordinate NADPH: Ala-8, Gln-10, Leu-11, Ser-34, Asp-36, Asn-56, Val-70, Lys-71, and Ala-97. Residues Asn-56, 69–72 (AVKP), and 95–97 (CAA) contribute to the NADP(+) site. An L-proline-binding site is contributed by Glu-164. Asn-230 provides a ligand contact to NADPH. L-proline contacts are provided by Ala-237 and Thr-238. A phosphoserine mark is found at Ser-278 and Ser-301.

The protein belongs to the pyrroline-5-carboxylate reductase family. In terms of assembly, homodecamer; composed of 5 homodimers. Interacts with LTO1. Highly expressed in osteoblasts and skin.

It is found in the mitochondrion. The enzyme catalyses L-proline + NADP(+) = (S)-1-pyrroline-5-carboxylate + NADPH + 2 H(+). It carries out the reaction L-proline + NAD(+) = (S)-1-pyrroline-5-carboxylate + NADH + 2 H(+). Its pathway is amino-acid biosynthesis; L-proline biosynthesis; L-proline from L-glutamate 5-semialdehyde: step 1/1. Functionally, oxidoreductase that catalyzes the last step in proline biosynthesis, which corresponds to the reduction of pyrroline-5-carboxylate to L-proline using NAD(P)H. At physiologic concentrations, has higher specific activity in the presence of NADH. Involved in the cellular response to oxidative stress. The polypeptide is Pyrroline-5-carboxylate reductase 1, mitochondrial (Mus musculus (Mouse)).